The chain runs to 201 residues: Small ribosomal subunit protein uS4 (201 aa).

Positions 1 to 46 (MARYTGPRSRISRRFGEPVMGDSKALQKKNYAPGMHGRNKKRKQSE) are disordered. The S4 RNA-binding domain occupies 92–151 (ARLDNTVYRLGIASSRRAARQLVIHKHIVVNGDVVNIPSYQLKPGDQLGVREKSKSIEAI).

Belongs to the universal ribosomal protein uS4 family. In terms of assembly, part of the 30S ribosomal subunit. Contacts protein S5. The interaction surface between S4 and S5 is involved in control of translational fidelity.

Its function is as follows. One of the primary rRNA binding proteins, it binds directly to 16S rRNA where it nucleates assembly of the body of the 30S subunit. With S5 and S12 plays an important role in translational accuracy. This is Small ribosomal subunit protein uS4 from Cytophaga hutchinsonii (strain ATCC 33406 / DSM 1761 / CIP 103989 / NBRC 15051 / NCIMB 9469 / D465).